A 733-amino-acid chain; its full sequence is Protein ROG3 (733 aa).

The PY-motif signature appears at proline 460–tyrosine 463. Residues arginine 518–proline 566 form a disordered region. Positions leucine 523–leucine 540 are enriched in low complexity. Residues proline 625 to tyrosine 628 carry the PY-motif motif. 2 disordered regions span residues glutamine 636–threonine 658 and glutamate 693–arginine 733. Residues arginine 646 to threonine 658 are compositionally biased toward low complexity.

This sequence belongs to the arrestin family. In terms of assembly, interacts with RSP5 via its 2 PY-motifs.

Involved in resistance to GST substrate o-dinitrobenzene (o-DNB). The protein is Protein ROG3 (ROG3) of Saccharomyces cerevisiae (strain ATCC 204508 / S288c) (Baker's yeast).